We begin with the raw amino-acid sequence, 274 residues long: 4-hydroxy-3-methylbut-2-enyl diphosphate reductase (274 aa).

C12 lines the [4Fe-4S] cluster pocket. Residues H36 and H70 each coordinate (2E)-4-hydroxy-3-methylbut-2-enyl diphosphate. 2 residues coordinate dimethylallyl diphosphate: H36 and H70. Residues H36 and H70 each contribute to the isopentenyl diphosphate site. C92 contributes to the [4Fe-4S] cluster binding site. H120 contributes to the (2E)-4-hydroxy-3-methylbut-2-enyl diphosphate binding site. A dimethylallyl diphosphate-binding site is contributed by H120. Residue H120 participates in isopentenyl diphosphate binding. The Proton donor role is filled by E122. Residue T158 participates in (2E)-4-hydroxy-3-methylbut-2-enyl diphosphate binding. C186 provides a ligand contact to [4Fe-4S] cluster. (2E)-4-hydroxy-3-methylbut-2-enyl diphosphate-binding residues include S214, S215, N216, and S258. S214, S215, N216, and S258 together coordinate dimethylallyl diphosphate. Isopentenyl diphosphate-binding residues include S214, S215, N216, and S258.

It belongs to the IspH family. It depends on [4Fe-4S] cluster as a cofactor.

It catalyses the reaction isopentenyl diphosphate + 2 oxidized [2Fe-2S]-[ferredoxin] + H2O = (2E)-4-hydroxy-3-methylbut-2-enyl diphosphate + 2 reduced [2Fe-2S]-[ferredoxin] + 2 H(+). It carries out the reaction dimethylallyl diphosphate + 2 oxidized [2Fe-2S]-[ferredoxin] + H2O = (2E)-4-hydroxy-3-methylbut-2-enyl diphosphate + 2 reduced [2Fe-2S]-[ferredoxin] + 2 H(+). The protein operates within isoprenoid biosynthesis; dimethylallyl diphosphate biosynthesis; dimethylallyl diphosphate from (2E)-4-hydroxy-3-methylbutenyl diphosphate: step 1/1. It participates in isoprenoid biosynthesis; isopentenyl diphosphate biosynthesis via DXP pathway; isopentenyl diphosphate from 1-deoxy-D-xylulose 5-phosphate: step 6/6. Its function is as follows. Catalyzes the conversion of 1-hydroxy-2-methyl-2-(E)-butenyl 4-diphosphate (HMBPP) into a mixture of isopentenyl diphosphate (IPP) and dimethylallyl diphosphate (DMAPP). Acts in the terminal step of the DOXP/MEP pathway for isoprenoid precursor biosynthesis. The chain is 4-hydroxy-3-methylbut-2-enyl diphosphate reductase from Helicobacter pylori (strain Shi470).